The primary structure comprises 150 residues: Transcription antitermination protein NusB (150 aa).

It belongs to the NusB family.

Functionally, involved in transcription antitermination. Required for transcription of ribosomal RNA (rRNA) genes. Binds specifically to the boxA antiterminator sequence of the ribosomal RNA (rrn) operons. The protein is Transcription antitermination protein NusB of Streptococcus pyogenes serotype M6 (strain ATCC BAA-946 / MGAS10394).